Here is a 338-residue protein sequence, read N- to C-terminus: UDP-3-O-acylglucosamine N-acyltransferase (338 aa).

Histidine 239 functions as the Proton acceptor in the catalytic mechanism.

The protein belongs to the transferase hexapeptide repeat family. LpxD subfamily. Homotrimer.

The catalysed reaction is a UDP-3-O-[(3R)-3-hydroxyacyl]-alpha-D-glucosamine + a (3R)-hydroxyacyl-[ACP] = a UDP-2-N,3-O-bis[(3R)-3-hydroxyacyl]-alpha-D-glucosamine + holo-[ACP] + H(+). The protein operates within bacterial outer membrane biogenesis; LPS lipid A biosynthesis. In terms of biological role, catalyzes the N-acylation of UDP-3-O-acylglucosamine using 3-hydroxyacyl-ACP as the acyl donor. Is involved in the biosynthesis of lipid A, a phosphorylated glycolipid that anchors the lipopolysaccharide to the outer membrane of the cell. In Xylella fastidiosa (strain M23), this protein is UDP-3-O-acylglucosamine N-acyltransferase.